The chain runs to 1793 residues: Brefeldin A-inhibited guanine nucleotide-exchange protein 2 (1793 aa).

An N-acetylalanine modification is found at A2. 3 disordered regions span residues 45 to 71 (NSLQ…PGPL), 266 to 299 (TMSG…LLDS), and 579 to 606 (GSPQ…GGTS). The span at 55-66 (SSAATDSESESS) shows a compositional bias: low complexity. Residues 270–281 (SGSGSGSGGQDG) show a composition bias toward gly residues. Polar residues-rich tracts occupy residues 284–294 (GTTTVETTNPT) and 594–605 (GSDTYSESSGGT). S595 carries the post-translational modification Phosphoserine. One can recognise an SEC7 domain in the interval 610–797 (AIEQRRAYKL…RSLYERITKH (188 aa)). E712 is an active-site residue. Positions 1311–1327 (NKYKGTSGKIPQSSLHS) are enriched in polar residues. Positions 1311 to 1333 (NKYKGTSGKIPQSSLHSGKSGKQ) are disordered.

In terms of assembly, homodimer.

It localises to the cytoplasm. The protein resides in the cytosol. Its subcellular location is the membrane. Inhibited by brefeldin A. In terms of biological role, activates the ARF proteins by exchanging bound GDP for free GTP. Plays a role in vesicular protein sorting. The chain is Brefeldin A-inhibited guanine nucleotide-exchange protein 2 (BIG2) from Arabidopsis thaliana (Mouse-ear cress).